Reading from the N-terminus, the 284-residue chain is Mevalonate kinase (284 aa).

86-96 contributes to the ATP binding site; that stretch reads PIGSGLGSSAA. The Proton acceptor role is filled by Asp137.

The protein belongs to the GHMP kinase family. Mevalonate kinase subfamily. In terms of assembly, homodimer. Requires Mg(2+) as cofactor.

The protein resides in the cytoplasm. It catalyses the reaction (R)-mevalonate + ATP = (R)-5-phosphomevalonate + ADP + H(+). It functions in the pathway isoprenoid biosynthesis; isopentenyl diphosphate biosynthesis via mevalonate pathway; isopentenyl diphosphate from (R)-mevalonate: step 1/3. Catalyzes the phosphorylation of (R)-mevalonate (MVA) to (R)-mevalonate 5-phosphate (MVAP). Functions in the mevalonate (MVA) pathway leading to isopentenyl diphosphate (IPP), a key precursor for the biosynthesis of isoprenoid compounds such as archaeal membrane lipids. The polypeptide is Mevalonate kinase (Archaeoglobus fulgidus (strain ATCC 49558 / DSM 4304 / JCM 9628 / NBRC 100126 / VC-16)).